A 101-amino-acid chain; its full sequence is Large ribosomal subunit protein bL25 (101 aa).

This sequence belongs to the bacterial ribosomal protein bL25 family. Part of the 50S ribosomal subunit; part of the 5S rRNA/L5/L18/L25 subcomplex. Contacts the 5S rRNA. Binds to the 5S rRNA independently of L5 and L18.

In terms of biological role, this is one of the proteins that binds to the 5S RNA in the ribosome where it forms part of the central protuberance. This chain is Large ribosomal subunit protein bL25, found in Thermosynechococcus vestitus (strain NIES-2133 / IAM M-273 / BP-1).